The following is a 590-amino-acid chain: Protein OS-9 homolog (590 aa).

The signal sequence occupies residues 1–19 (MRRPSLALLALSSLPFGSA). The tract at residues 83-106 (SAIRESATANADTDNGDESIGGTS) is disordered. Asn136 is a glycosylation site (N-linked (GlcNAc...) asparagine). The region spanning 167–312 (NQCLHFVSGW…VIHTPRLCAD (146 aa)) is the MRH domain. A disulfide bridge connects residues Cys169 and Cys182. Residues Trp176, Trp177, and Gln189 each coordinate a mannooligosaccharide derivative. The segment at 198-248 (GGPPLRDKNSQEYILGTSLPPSSHSQKGKQIEVPNNEQKQLSPPPNTELQA) is disordered. 2 disulfide bridges follow: Cys265–Cys298 and Cys280–Cys310. A mannooligosaccharide derivative-binding residues include Asp266, Arg272, Glu294, and Tyr300. Disordered stretches follow at residues 357-376 (AAVT…PEKL), 436-472 (GDDN…MKKM), and 545-590 (YEDE…RDEL). Over residues 446–455 (HHPKAGKGRK) the composition is skewed to basic residues. 2 stretches are compositionally biased toward basic and acidic residues: residues 556-568 (EAGK…KKGG) and 579-590 (EGSKEEYYRDEL). Residues 587–590 (RDEL) carry the Prevents secretion from ER motif.

It belongs to the OS-9 family. In terms of assembly, interacts with missfolded ER lumenal proteins.

It localises to the endoplasmic reticulum membrane. Lectin involved in the quality control of the secretory pathway. As a member of the endoplasmic reticulum-associated degradation lumenal (ERAD-L) surveillance system, targets misfolded endoplasmic reticulum lumenal glycoproteins for degradation. In Neurospora crassa (strain ATCC 24698 / 74-OR23-1A / CBS 708.71 / DSM 1257 / FGSC 987), this protein is Protein OS-9 homolog (yos-9).